We begin with the raw amino-acid sequence, 233 residues long: UPF0280 protein AF_0649 (233 aa).

Belongs to the UPF0280 family.

This is UPF0280 protein AF_0649 from Archaeoglobus fulgidus (strain ATCC 49558 / DSM 4304 / JCM 9628 / NBRC 100126 / VC-16).